We begin with the raw amino-acid sequence, 239 residues long: Serine protease SplC (239 aa).

The signal sequence occupies residues 1–36 (MNKNIVIKSMAALAILTSVTGINAAVVDETQQIANA). Active-site charge relay system residues include histidine 75, aspartate 113, and serine 193.

The protein belongs to the peptidase S1B family.

Its subcellular location is the secreted. This Staphylococcus aureus (strain bovine RF122 / ET3-1) protein is Serine protease SplC (splC).